We begin with the raw amino-acid sequence, 214 residues long: Charged multivesicular body protein 2b-B (214 aa).

The stretch at Gln-25–Lys-55 forms a coiled coil. Residues Met-178–Ser-200 form a disordered region. The short motif at Glu-202–Gly-212 is the MIT-interacting motif element.

Belongs to the SNF7 family. In terms of assembly, probable core component of the endosomal sorting required for transport complex III (ESCRT-III). ESCRT-III components are thought to multimerize to form a flat lattice on the perimeter membrane of the endosome.

Its subcellular location is the cytoplasm. The protein localises to the cytosol. The protein resides in the late endosome membrane. Its function is as follows. Probable core component of the endosomal sorting required for transport complex III (ESCRT-III) which is involved in multivesicular bodies (MVBs) formation and sorting of endosomal cargo proteins into MVBs. MVBs contain intraluminal vesicles (ILVs) that are generated by invagination and scission from the limiting membrane of the endosome and mostly are delivered to lysosomes enabling degradation of membrane proteins, such as stimulated growth factor receptors, lysosomal enzymes and lipids. In Xenopus laevis (African clawed frog), this protein is Charged multivesicular body protein 2b-B (chmp2b-b).